The following is a 331-amino-acid chain: XylDLEGF operon transcriptional activator 3 (331 aa).

The region spanning 214–315 (ERVVQFIEDN…GELPSDTLRR (102 aa)) is the HTH araC/xylS-type domain. 2 DNA-binding regions (H-T-H motif) span residues 231–252 (ERLAELALMSPRSLYTLFEKHA) and 282–305 (VTEMALDYGFFHTGRFAENYRSTF).

The protein resides in the cytoplasm. Functionally, regulatory protein of the TOL plasmid xyl operons. XylS activates the xylXYZLTEGFJQKIH operon required for the degradation of toluene, m-xylene and p-xylene. This chain is XylDLEGF operon transcriptional activator 3 (xylS3), found in Pseudomonas putida (Arthrobacter siderocapsulatus).